The primary structure comprises 113 residues: UPF0482 protein YnfB (113 aa).

Positions 1–28 (MKITLSKRIGLLAILLPCALALSTTVHA) are cleaved as a signal peptide.

This sequence belongs to the UPF0482 family.

This is UPF0482 protein YnfB from Escherichia coli O8 (strain IAI1).